The chain runs to 271 residues: 5'-nucleotidase SurE (271 aa).

A divalent metal cation is bound by residues aspartate 14, aspartate 15, serine 46, and asparagine 104.

The protein belongs to the SurE nucleotidase family. The cofactor is a divalent metal cation.

It is found in the cytoplasm. The catalysed reaction is a ribonucleoside 5'-phosphate + H2O = a ribonucleoside + phosphate. Nucleotidase that shows phosphatase activity on nucleoside 5'-monophosphates. The chain is 5'-nucleotidase SurE from Gloeothece citriformis (strain PCC 7424) (Cyanothece sp. (strain PCC 7424)).